Here is a 962-residue protein sequence, read N- to C-terminus: pH-response regulator protein palF/prr-3 (962 aa).

Disordered stretches follow at residues 1–43, 225–326, 568–675, and 689–962; these read MGPF…DSST, APPK…THPS, TDSN…PDEN, and RLLP…RYER. Over residues 237–246 the composition is skewed to basic residues; sequence ISKRAKKKRP. Composition is skewed to polar residues over residues 297 to 307, 314 to 326, and 581 to 596; these read GFSQAPRSVSH, SGDSAASLSTHPS, and PSLTHTPSVTGGSNYV. Composition is skewed to low complexity over residues 696 to 722 and 738 to 747; these read PIAAASSSSFSAAVPSPSASSHVPDSS and PTPAATPATA. A compositionally biased stretch (basic and acidic residues) spans 793-805; that stretch reads TEDKQELERRRLL. Residues 830-839 are compositionally biased toward low complexity; sequence AGPSGSRAGP. Over residues 840-849 the composition is skewed to pro residues; sequence SAPPPAPPVA. The span at 913 to 928 shows a compositional bias: low complexity; that stretch reads PSSPVLAPASAFFPAS. The segment covering 929-949 has biased composition (polar residues); that stretch reads GSGNVHDSPREQGQQARSDSS.

The protein belongs to the arrestin family. PalF/RIM8 subfamily.

In terms of biological role, required for the proteolytic cleavage of the transcription factor pacc-1 in response to alkaline ambient pH. The protein is pH-response regulator protein palF/prr-3 (prr-3) of Neurospora crassa (strain ATCC 24698 / 74-OR23-1A / CBS 708.71 / DSM 1257 / FGSC 987).